The following is a 323-amino-acid chain: Glutamyl-Q tRNA(Asp) synthetase (323 aa).

L-glutamate is bound by residues Arg-5 to Thr-9 and Glu-41. The 'HIGH' region signature appears at Pro-8 to Asn-18. Zn(2+) is bound by residues Cys-105, Cys-107, Tyr-129, and Cys-133. L-glutamate is bound by residues Tyr-193 and Arg-211. The short motif at Arg-249–Arg-253 is the 'KMSKS' region element. Lys-252 is a binding site for ATP.

The protein belongs to the class-I aminoacyl-tRNA synthetase family. GluQ subfamily. The cofactor is Zn(2+).

Functionally, catalyzes the tRNA-independent activation of glutamate in presence of ATP and the subsequent transfer of glutamate onto a tRNA(Asp). Glutamate is transferred on the 2-amino-5-(4,5-dihydroxy-2-cyclopenten-1-yl) moiety of the queuosine in the wobble position of the QUC anticodon. The polypeptide is Glutamyl-Q tRNA(Asp) synthetase (Symbiobacterium thermophilum (strain DSM 24528 / JCM 14929 / IAM 14863 / T)).